Consider the following 534-residue polypeptide: MAQDDSYEEKPEVISSDSGGSGYSTEIQIVGTVTSSDGSYVEYEIVHQKRSVWRRYSDFESLVKLMRRQYPAAIVPPIPGKQSLLSYAKHPRKAKSDAEFLNFRSRMLELFLRQCLLHPCIRSNPIFDKFIHSTVSWHVTLSSLDLPKDSNTDPLRLPPIATEHDPFAHLRSSMPLVMANSLSPPSSRALKPIHSLSNPSTASSLEPSSPLGSEDECHPPTSDMQPTHELNESPSTPTAPDFPHYNSSPSELSPTQRRSSISNGKDAPSPVLKDLTSYTQEVIVCRKFLHHSLSPSIHSTLSSISKMESCLSKLGSAFHSLTALNEIQLANHLQVIANAFEFSGMYAKEFEQEFNSSVYEKMVQSMQLAKCAADALKYKQLKIQQRDFLQDQLIHSNTMSATDSMVAASPTIHPATRLNTIQRAVVSQAKKGYTIFGRLQNVLHDFVEGETSISKESLQQHKNTIENQLAAANWDCQKIDEFMDAELKFYKECQTSQWEEIIKSVHECIYKWAQTNLQRWLRTREELENLSKDI.

The interval 1-21 (MAQDDSYEEKPEVISSDSGGS) is disordered. Positions 1–137 (MAQDDSYEEK…DKFIHSTVSW (137 aa)) constitute a PX domain. Arg-55, Ser-57, Lys-81, and Arg-104 together coordinate a 1,2-diacyl-sn-glycero-3-phospho-(1D-myo-inositol-3-phosphate). Residues 179-272 (ANSLSPPSSR…NGKDAPSPVL (94 aa)) are disordered. Residues 203–212 (SSLEPSSPLG) show a composition bias toward low complexity. The span at 245–263 (YNSSPSELSPTQRRSSISN) shows a compositional bias: polar residues.

It belongs to the sorting nexin family.

The protein localises to the cytoplasm. The protein resides in the endosome membrane. It is found in the preautophagosomal structure membrane. Its function is as follows. Required for cytoplasm to vacuole transport (Cvt), pexophagy and mitophagy. Also involved in endoplasmic reticulum-specific autophagic process and is essential for the survival of cells subjected to severe ER stress. Functions in protein retrieval from the endocytic pathway. The polypeptide is Autophagy-related protein 20 (atg20) (Schizosaccharomyces pombe (strain 972 / ATCC 24843) (Fission yeast)).